Consider the following 418-residue polypeptide: Trafficking protein particle complex subunit 13 (418 aa).

This sequence belongs to the TRAPPC13 family. Part of the multisubunit TRAPP (transport protein particle) complex.

The sequence is that of Trafficking protein particle complex subunit 13 (Trappc13) from Rattus norvegicus (Rat).